The primary structure comprises 448 residues: Argininosuccinate synthase (448 aa).

ATP contacts are provided by residues Ala17–Ser25 and Ala43. Residue Tyr99 coordinates L-citrulline. Residues Gly129 and Thr131 each coordinate ATP. Residues Thr131, Asn135, and Asp136 each contribute to the L-aspartate site. Asn135 provides a ligand contact to L-citrulline. Asp136 is a binding site for ATP. Arg139 and Ser192 together coordinate L-citrulline. Asp194 provides a ligand contact to ATP. The L-citrulline site is built by Thr201, Glu203, and Glu280.

This sequence belongs to the argininosuccinate synthase family. Type 2 subfamily. In terms of assembly, homotetramer.

The protein localises to the cytoplasm. The enzyme catalyses L-citrulline + L-aspartate + ATP = 2-(N(omega)-L-arginino)succinate + AMP + diphosphate + H(+). Its pathway is amino-acid biosynthesis; L-arginine biosynthesis; L-arginine from L-ornithine and carbamoyl phosphate: step 2/3. The polypeptide is Argininosuccinate synthase (Pectobacterium atrosepticum (strain SCRI 1043 / ATCC BAA-672) (Erwinia carotovora subsp. atroseptica)).